Here is a 406-residue protein sequence, read N- to C-terminus: Cysteine desulfurase (406 aa).

The residue at position 226 (K226) is an N6-(pyridoxal phosphate)lysine. The active-site Cysteine persulfide intermediate is C364.

This sequence belongs to the class-V pyridoxal-phosphate-dependent aminotransferase family. Csd subfamily. Homodimer. Interacts with SufE and the SufBCD complex composed of SufB, SufC and SufD. The interaction with SufE is required to mediate the direct transfer of the sulfur atom from the S-sulfanylcysteine. It depends on pyridoxal 5'-phosphate as a cofactor.

It is found in the cytoplasm. The catalysed reaction is (sulfur carrier)-H + L-cysteine = (sulfur carrier)-SH + L-alanine. It catalyses the reaction L-selenocysteine + AH2 = hydrogenselenide + L-alanine + A + H(+). Its pathway is cofactor biosynthesis; iron-sulfur cluster biosynthesis. Its function is as follows. Cysteine desulfurases mobilize the sulfur from L-cysteine to yield L-alanine, an essential step in sulfur metabolism for biosynthesis of a variety of sulfur-containing biomolecules. Component of the suf operon, which is activated and required under specific conditions such as oxidative stress and iron limitation. Acts as a potent selenocysteine lyase in vitro, that mobilizes selenium from L-selenocysteine. Selenocysteine lyase activity is however unsure in vivo. The sequence is that of Cysteine desulfurase from Yersinia pestis bv. Antiqua (strain Angola).